A 398-amino-acid chain; its full sequence is Stabilizer of axonemal microtubules 2 (398 aa).

Mn regions lie at residues 114-126, 148-162, 248-260, 282-296, 316-328, and 350-364; these read STTF…PQEI, ITSH…QLEL, NSTS…PYQA, KSIM…ESCR, LSTF…PHEL, and VTMY…RQEI.

This sequence belongs to the FAM154 family.

In Homo sapiens (Human), this protein is Stabilizer of axonemal microtubules 2 (SAXO2).